Here is a 284-residue protein sequence, read N- to C-terminus: Lipoyl synthase (284 aa).

[4Fe-4S] cluster is bound by residues cysteine 38, cysteine 43, cysteine 49, cysteine 64, cysteine 68, cysteine 71, and serine 277. The 217-residue stretch at 50 to 266 (WSRGTATFLL…RDEALGMGFS (217 aa)) folds into the Radical SAM core domain.

It belongs to the radical SAM superfamily. Lipoyl synthase family. Requires [4Fe-4S] cluster as cofactor.

It localises to the cytoplasm. The enzyme catalyses [[Fe-S] cluster scaffold protein carrying a second [4Fe-4S](2+) cluster] + N(6)-octanoyl-L-lysyl-[protein] + 2 oxidized [2Fe-2S]-[ferredoxin] + 2 S-adenosyl-L-methionine + 4 H(+) = [[Fe-S] cluster scaffold protein] + N(6)-[(R)-dihydrolipoyl]-L-lysyl-[protein] + 4 Fe(3+) + 2 hydrogen sulfide + 2 5'-deoxyadenosine + 2 L-methionine + 2 reduced [2Fe-2S]-[ferredoxin]. The protein operates within protein modification; protein lipoylation via endogenous pathway; protein N(6)-(lipoyl)lysine from octanoyl-[acyl-carrier-protein]: step 2/2. Catalyzes the radical-mediated insertion of two sulfur atoms into the C-6 and C-8 positions of the octanoyl moiety bound to the lipoyl domains of lipoate-dependent enzymes, thereby converting the octanoylated domains into lipoylated derivatives. This is Lipoyl synthase from Chlorobium phaeovibrioides (strain DSM 265 / 1930) (Prosthecochloris vibrioformis (strain DSM 265)).